Consider the following 167-residue polypeptide: CS6 fimbrial subunit B (167 aa).

The first 21 residues, 1–21 (MLKKIIPAIVLIAGTSGVVNA), serve as a signal peptide directing secretion.

The protein resides in the fimbrium. The sequence is that of CS6 fimbrial subunit B (cssB) from Escherichia coli.